The following is a 424-amino-acid chain: Serine--tRNA ligase (424 aa).

233–235 lines the L-serine pocket; the sequence is TAE. 264 to 266 is an ATP binding site; the sequence is RRE. Position 287 (E287) interacts with L-serine. 351-354 is an ATP binding site; it reads EISS. S387 contributes to the L-serine binding site.

Belongs to the class-II aminoacyl-tRNA synthetase family. Type-1 seryl-tRNA synthetase subfamily. As to quaternary structure, homodimer. The tRNA molecule binds across the dimer.

It localises to the cytoplasm. It carries out the reaction tRNA(Ser) + L-serine + ATP = L-seryl-tRNA(Ser) + AMP + diphosphate + H(+). The enzyme catalyses tRNA(Sec) + L-serine + ATP = L-seryl-tRNA(Sec) + AMP + diphosphate + H(+). The protein operates within aminoacyl-tRNA biosynthesis; selenocysteinyl-tRNA(Sec) biosynthesis; L-seryl-tRNA(Sec) from L-serine and tRNA(Sec): step 1/1. Functionally, catalyzes the attachment of serine to tRNA(Ser). Is also able to aminoacylate tRNA(Sec) with serine, to form the misacylated tRNA L-seryl-tRNA(Sec), which will be further converted into selenocysteinyl-tRNA(Sec). This Acaryochloris marina (strain MBIC 11017) protein is Serine--tRNA ligase.